The primary structure comprises 165 residues: UPF0179 protein Igni_1272 (165 aa).

The protein belongs to the UPF0179 family.

The chain is UPF0179 protein Igni_1272 from Ignicoccus hospitalis (strain KIN4/I / DSM 18386 / JCM 14125).